The following is a 208-amino-acid chain: MNKINNNNNNIHKLIKSLKIGNNDRINNNNNIINNNNIINNNNNDLLIEDDYFNGLLSTSPLPSQFNQLSSSPPSINSSLESIPMSPIRIQSNNVCPGAPIKPKKYLLPKSNYNLPRQRLVFTECVGSGSGSDSSSGSTSSPNTVNNYNSDDESNAAVVSFSPKVSKKLSQSSVQFIPSSSFRQMDSPSGNQNVPVFNSPKARKRLVF.

The segment at 126–151 (VGSGSGSDSSSGSTSSPNTVNNYNSD) is disordered. The span at 131-141 (GSDSSSGSTSS) shows a compositional bias: low complexity.

This is an uncharacterized protein from Dictyostelium discoideum (Social amoeba).